The chain runs to 128 residues: NADH-ubiquinone oxidoreductase chain 3 (128 aa).

3 helical membrane passes run 3–23 (TIYT…NYLI), 52–72 (VAFI…SSIL), and 84–104 (YGLS…VYEI).

The protein belongs to the complex I subunit 3 family.

Its subcellular location is the mitochondrion membrane. It catalyses the reaction a ubiquinone + NADH + 5 H(+)(in) = a ubiquinol + NAD(+) + 4 H(+)(out). Its function is as follows. Core subunit of the mitochondrial membrane respiratory chain NADH dehydrogenase (Complex I) that is believed to belong to the minimal assembly required for catalysis. Complex I functions in the transfer of electrons from NADH to the respiratory chain. The immediate electron acceptor for the enzyme is believed to be ubiquinone. This is NADH-ubiquinone oxidoreductase chain 3 (ND3) from Debaryomyces hansenii (strain ATCC 36239 / CBS 767 / BCRC 21394 / JCM 1990 / NBRC 0083 / IGC 2968) (Yeast).